Consider the following 409-residue polypeptide: Major capsid protein (409 aa).

This sequence belongs to the lambda phage major capsid protein family. Homomultimer. Interacts with the portal protein. Interacts with the decoration protein.

It is found in the virion. It localises to the host cytoplasm. Its function is as follows. Assembles to form an icosahedric capsid shell with a T=7 symmetry although with a diameter of about 82 nm, which is a larger volume than the usual T=7 capsids. A dramatic reconfiguration of the capsid shell that expands the procaspid from a diameter of 66 nm to a supersized capsid of 82 nm, allows packaging of the large viral DNA genome. The capsid decoration protein binds the expanded capsid and stabilizes it. This Thermus virus P23-45 (Thermus thermophilus phage P23-45) protein is Major capsid protein.